The following is a 300-amino-acid chain: Mitochondrial carnitine/acylcarnitine carrier-like protein (300 aa).

3 Solcar repeats span residues 2–93 (ADAW…MEGL), 102–201 (LTIS…FKRF), and 211–298 (LGQG…TRSS). Helical transmembrane passes span 8-28 (LASGTVGGAAQLVVGHPFDTI), 64-84 (GLYKGMGAPLATVAAFNAVLF), 108-128 (FVAGAGAGFAVSFLACPTELI), 176-195 (GLFPTFAREVPGNATMFAAY), 211-231 (LGQGSLIMAGGVAGASFWGIV), and 273-292 (GFGPAMARSVPANAACFLAY).

It belongs to the mitochondrial carrier (TC 2.A.29) family. In terms of tissue distribution, high expression in cotyledons, leaves, flowers and developing siliques. Lower expression in roots and maturing siliques. Not detected in meristematic tissues.

The protein resides in the mitochondrion inner membrane. In terms of biological role, involved in photorespiratory metabolism. Acts probably as a carrier for a glycine decarboxylase (GDC) cofactor or, alternatively, may act as a mitochondrial glycine shuttle. Involved in the transition from the embryonic stage to the juvenile autotrophic stage. In Arabidopsis thaliana (Mouse-ear cress), this protein is Mitochondrial carnitine/acylcarnitine carrier-like protein (BOU).